We begin with the raw amino-acid sequence, 669 residues long: Small ribosomal subunit protein mS39 (669 aa).

The N-terminal 13 residues, 1 to 13 (MAAPCVRLGSVRC), are a transit peptide targeting the mitochondrion. PPR repeat units lie at residues 129–163 (IEGV…GTAP), 164–199 (SLET…DDQD), 209–239 (RPGQ…MPER), 240–274 (NAHS…RLTA), 275–314 (DVQT…NVRP), 315–351 (NLLT…NIEP), 352–392 (SLGT…FTLR), 396–430 (DVYF…DNRG), 438–472 (QSTY…LYYP), 473–507 (NSRG…GHSN), and 556–590 (SSAS…HRVP). A disordered region spans residues 186 to 218 (DIQTSEQNQQDDQDQQETEDSKKRPGQYRKASE). A compositionally biased stretch (acidic residues) spans 194-203 (QQDDQDQQET). A disordered region spans residues 648–669 (EDLQKSHSSSSSSSESSDSDRE). The span at 653–663 (SHSSSSSSSES) shows a compositional bias: low complexity.

It belongs to the mitochondrion-specific ribosomal protein mS39 family.

It is found in the mitochondrion. Mitochondrial protein that may have a role in mitochondrial translation. The polypeptide is Small ribosomal subunit protein mS39 (ptcd3) (Xenopus laevis (African clawed frog)).